Reading from the N-terminus, the 176-residue chain is MDSQVRQNYHRDCEAAVNRMINMELFASYSYTSMAFYFSRDDVALPGFAHFFKENSDEEREHADKLLTFQNSRGGRIFLQDIKKPERDEWGSGLDALQSSLQLEKNVNQALLDLHKIASDHTDPHMCDFLETHYLNEQVESIKKLGDFITNLSRMDAVKNKMAEYLFDKHTMGGKN.

Positions 7-156 constitute a Ferritin-like diiron domain; the sequence is QNYHRDCEAA…DFITNLSRMD (150 aa). Fe cation contacts are provided by E24, E59, H62, E104, and Q138.

The protein belongs to the ferritin family. In terms of assembly, in liver, forms a heteromer consisting of middle and heavy subunits. The functional molecule forms a roughly spherical shell with a diameter of 12 nm and contains a central cavity into which the insoluble mineral iron core is deposited. In terms of tissue distribution, liver (at protein level).

It carries out the reaction 4 Fe(2+) + O2 + 4 H(+) = 4 Fe(3+) + 2 H2O. In terms of biological role, stores iron in a soluble, non-toxic, readily available form. Important for iron homeostasis. Has ferroxidase activity. Iron is taken up in the ferrous form and deposited as ferric hydroxides after oxidation. This chain is Ferritin, liver middle subunit, found in Trematomus bernacchii (Emerald rockcod).